Consider the following 191-residue polypeptide: HTH-type transcriptional regulator YjdC (191 aa).

Positions 1 to 60 (MQREDVLGEALKLLELQGIANTTLEMVAERVDYPLDELRRFWPDKEAILYDALRYLSQQI) constitute an HTH tetR-type domain.

This chain is HTH-type transcriptional regulator YjdC (yjdC), found in Escherichia coli (strain K12).